Here is a 372-residue protein sequence, read N- to C-terminus: Flagellar P-ring protein (372 aa).

The first 26 residues, 1–26 (MNLSSLPFRLLAAAVALCAIAAPASA), serve as a signal peptide directing secretion.

It belongs to the FlgI family. As to quaternary structure, the basal body constitutes a major portion of the flagellar organelle and consists of four rings (L,P,S, and M) mounted on a central rod.

The protein resides in the periplasm. It localises to the bacterial flagellum basal body. In terms of biological role, assembles around the rod to form the L-ring and probably protects the motor/basal body from shearing forces during rotation. This chain is Flagellar P-ring protein, found in Xanthomonas axonopodis pv. citri (strain 306).